The chain runs to 357 residues: Probable cinnamyl alcohol dehydrogenase 2 (357 aa).

Cysteine 47 serves as a coordination point for Zn(2+). Position 49 (serine 49) interacts with NADP(+). Positions 69, 70, 100, 103, 106, 114, and 163 each coordinate Zn(2+). NADP(+) contacts are provided by residues threonine 167, 188-193 (GLGGVG), 211-216 (SSSDKK), threonine 251, glycine 275, and 298-300 (SFI).

The protein belongs to the zinc-containing alcohol dehydrogenase family. In terms of assembly, homodimer. It depends on Zn(2+) as a cofactor.

It carries out the reaction (E)-cinnamyl alcohol + NADP(+) = (E)-cinnamaldehyde + NADPH + H(+). It catalyses the reaction (E)-coniferol + NADP(+) = (E)-coniferaldehyde + NADPH + H(+). The enzyme catalyses (E)-sinapyl alcohol + NADP(+) = (E)-sinapaldehyde + NADPH + H(+). The catalysed reaction is (E)-4-coumaroyl alcohol + NADP(+) = (E)-4-coumaraldehyde + NADPH + H(+). It carries out the reaction (E)-caffeyl alcohol + NADP(+) = (E)-caffeyl aldehyde + NADPH + H(+). Its pathway is aromatic compound metabolism; phenylpropanoid biosynthesis. Involved in lignin biosynthesis. Catalyzes the final step specific for the production of lignin monomers. Catalyzes the NADPH-dependent reduction of coniferaldehyde, 5-hydroxyconiferaldehyde, sinapaldehyde, 4-coumaraldehyde and caffeyl aldehyde to their respective alcohols. The protein is Probable cinnamyl alcohol dehydrogenase 2 (CAD2) of Picea abies (Norway spruce).